The sequence spans 88 residues: Yop proteins translocation protein S (88 aa).

The next 2 membrane-spanning stretches (helical) occupy residues 15-35 (WLVL…GTLV) and 49-69 (LGFV…ASWL).

This sequence belongs to the FliQ/MopD/SpaQ family.

It is found in the cell membrane. In terms of biological role, component of the Yop secretion machinery. This chain is Yop proteins translocation protein S (yscS), found in Yersinia pestis.